A 366-amino-acid chain; its full sequence is Galactoside alpha-(1,2)-fucosyltransferase 1 (366 aa).

The Cytoplasmic segment spans residues 1–8 (MWPLSHRH). Residues 9-25 (LCLAFLLVCVLSAISFF) traverse the membrane as a helical; Signal-anchor for type II membrane protein segment. The Lumenal segment spans residues 26–366 (LHIHQDSIRH…LSPLWTLAEP (341 aa)). Asn66, Asn302, and Asn328 each carry an N-linked (GlcNAc...) asparagine glycan.

The protein belongs to the glycosyltransferase 11 family.

It localises to the golgi apparatus. The protein resides in the golgi stack membrane. It catalyses the reaction a beta-D-galactosyl-(1-&gt;4)-N-acetyl-beta-D-glucosaminyl derivative + GDP-beta-L-fucose = an alpha-L-Fuc-(1-&gt;2)-beta-D-Gal-(1-&gt;4)-beta-D-GlcNAc derivative + GDP + H(+). The catalysed reaction is a ganglioside GA1 + GDP-beta-L-fucose = a ganglioside Fuc-GA1 + GDP + H(+). It carries out the reaction a beta-D-Gal-(1-&gt;3)-beta-D-GlcNAc-(1-&gt;3)-beta-D-Gal-(1-&gt;4)-beta-D-Glc-(1&lt;-&gt;1')-Cer(d18:1(4E)) + GDP-beta-L-fucose = alpha-L-fucosyl-(1-&gt;2)- beta-D-galactosyl-(1-&gt;3)-N-acetyl-beta-D-glucosaminyl-(1-&gt;3)-beta-D-galactosyl-(1-&gt;4)-beta-D-glucosyl-(1&lt;-&gt;1')-N-acylsphing-4-enine + GDP + H(+). The enzyme catalyses a neolactoside nLc4Cer(d18:1(4E)) + GDP-beta-L-fucose = a neolactoside IV(2)-alpha-Fuc-nLc4Cer(d18:1(4E)) + GDP + H(+). It catalyses the reaction a ganglioside GM1 + GDP-beta-L-fucose = a ganglioside Fuc-GM1 + GDP + H(+). The catalysed reaction is beta-D-galactosyl-(1-&gt;3)-N-acetyl-D-galactosamine + GDP-beta-L-fucose = alpha-L-fucosyl-(1-&gt;2)-beta-D-galactosyl-(1-&gt;3)-N-acetyl-D-galactosamine + GDP + H(+). Its pathway is protein modification; protein glycosylation. In terms of biological role, catalyzes the transfer of L-fucose, from a guanosine diphosphate-beta-L-fucose, to the terminal galactose residue of glycoconjugates through an alpha(1,2) linkage leading to H antigen synthesis that is an intermediate substrate in the synthesis of ABO blood group antigens. H antigen is essential for maturation of the glomerular layer of the main olfactory bulb, in cell migration and early cell-cell contacts during tumor associated angiogenesis. Preferentially fucosylates soluble lactose and to a lesser extent fucosylates glycolipids gangliosides GA1 and GM1a. The sequence is that of Galactoside alpha-(1,2)-fucosyltransferase 1 from Aotus azarae (Azara's night monkey).